The primary structure comprises 73 residues: Large ribosomal subunit protein bL31 (73 aa).

Zn(2+)-binding residues include C16, C18, C36, and C39.

It belongs to the bacterial ribosomal protein bL31 family. Type A subfamily. Part of the 50S ribosomal subunit. Requires Zn(2+) as cofactor.

Binds the 23S rRNA. In Myxococcus xanthus (strain DK1622), this protein is Large ribosomal subunit protein bL31.